Reading from the N-terminus, the 165-residue chain is Thiol peroxidase (165 aa).

In terms of domain architecture, Thioredoxin spans 18 to 165 (PQVGDNLAEF…DYDAALAALN (148 aa)). Catalysis depends on cysteine 60, which acts as the Cysteine sulfenic acid (-SOH) intermediate. Cysteine 60 and cysteine 94 are disulfide-bonded.

It belongs to the peroxiredoxin family. Tpx subfamily. In terms of assembly, homodimer.

It catalyses the reaction a hydroperoxide + [thioredoxin]-dithiol = an alcohol + [thioredoxin]-disulfide + H2O. Its function is as follows. Thiol-specific peroxidase that catalyzes the reduction of hydrogen peroxide and organic hydroperoxides to water and alcohols, respectively. Plays a role in cell protection against oxidative stress by detoxifying peroxides. This Corynebacterium glutamicum (strain ATCC 13032 / DSM 20300 / JCM 1318 / BCRC 11384 / CCUG 27702 / LMG 3730 / NBRC 12168 / NCIMB 10025 / NRRL B-2784 / 534) protein is Thiol peroxidase.